A 416-amino-acid chain; its full sequence is uncharacterized protein (416 aa).

Residues 3–150 (LDVRTITPSE…SVYRAGLDAR (148 aa)) form the N-acetyltransferase domain. Acetyl-CoA contacts are provided by residues 83-85 (VTV) and 91-96 (RRGLLS). Residue Tyr-124 is the Proton donor of the active site. Phe-416 acts as the Proton acceptor; via carboxylate in catalysis.

This sequence belongs to the acetyltransferase Eis family. In terms of assembly, homohexamer; trimer of dimers.

This is an uncharacterized protein from Streptomyces griseus subsp. griseus (strain JCM 4626 / CBS 651.72 / NBRC 13350 / KCC S-0626 / ISP 5235).